The chain runs to 274 residues: Large ribosomal subunit protein uL2cz/uL2cy (274 aa).

Disordered regions lie at residues 1–21 and 224–274; these read MAIH…VDSQ and NPVD…RRSK.

The protein belongs to the universal ribosomal protein uL2 family. In terms of assembly, part of the 50S ribosomal subunit.

The protein localises to the plastid. It localises to the chloroplast. The chain is Large ribosomal subunit protein uL2cz/uL2cy (rpl2-A) from Gossypium hirsutum (Upland cotton).